Here is a 630-residue protein sequence, read N- to C-terminus: FAST kinase domain-containing protein 4 (630 aa).

The 59-residue stretch at 560 to 618 (IAFLRWEFPNFNSRSKDLLGRFVLARRHVLAAGFLVVDVPYYEWLDLKSEWQKSAYLKD) folds into the RAP domain.

This sequence belongs to the FAST kinase family. In terms of tissue distribution, expression detected in spleen, testis, colon, heart, smooth muscle, kidney, brain, lung, liver, brown and white adipose tissue with highest expression in testis, heart, smooth muscle and brown adipose tissue.

It is found in the mitochondrion matrix. Functionally, plays a role in processing of mitochondrial RNA precursors and in stabilization of a subset of mature mitochondrial RNA species, such as MT-CO1, MT-CO2, MT-CYB, MT-CO3, MT-ND3, MT-ND5 and MT-ATP8/6. May play a role in cell cycle progression. The chain is FAST kinase domain-containing protein 4 (Tbrg4) from Mus musculus (Mouse).